The following is a 277-amino-acid chain: Caspase-3 (277 aa).

M1 is subject to N-acetylmethionine. 2 propeptides span residues 1 to 9 (MENTENSVD) and 10 to 28 (SKSI…KSVD). The span at 1–10 (MENTENSVDS) shows a compositional bias: polar residues. Residues 1–25 (MENTENSVDSKSIKNSEPKIIHGSK) are disordered. K11 is subject to N6-acetyllysine. Over residues 11–20 (KSIKNSEPKI) the composition is skewed to basic and acidic residues. Phosphoserine is present on S26. Catalysis depends on residues H121 and C163. C163 is subject to S-nitrosocysteine; in inhibited form.

The protein belongs to the peptidase C14A family. Heterotetramer that consists of two anti-parallel arranged heterodimers, each one formed by a 17 kDa (p17) and a 12 kDa (p12) subunit. Interacts with BIRC6/bruce. In terms of processing, cleavage by granzyme B, caspase-6, caspase-8 and caspase-10 generates the two active subunits. Additional processing of the propeptides is likely due to the autocatalytic activity of the activated protease. Active heterodimers between the small subunit of caspase-7 protease and the large subunit of caspase-3 also occur and vice versa. S-nitrosylated on its catalytic site cysteine in unstimulated cell lines and denitrosylated upon activation of the Fas apoptotic pathway, associated with an increase in intracellular caspase activity. Fas therefore activates caspase-3 not only by inducing the cleavage of the caspase zymogen to its active subunits, but also by stimulating the denitrosylation of its active site thiol. Post-translationally, ubiquitinated by BIRC6; this activity is inhibited by DIABLO/SMAC.

Its subcellular location is the cytoplasm. It carries out the reaction Strict requirement for an Asp residue at positions P1 and P4. It has a preferred cleavage sequence of Asp-Xaa-Xaa-Asp-|- with a hydrophobic amino-acid residue at P2 and a hydrophilic amino-acid residue at P3, although Val or Ala are also accepted at this position.. With respect to regulation, inhibited by BIRC6; following inhibition of BIRC6-caspase binding by DIABLO/SMAC, BIRC6 is subjected to caspase cleavage, leading to an increase in active caspases. In terms of biological role, involved in the activation cascade of caspases responsible for apoptosis execution. At the onset of apoptosis, it proteolytically cleaves poly(ADP-ribose) polymerase PARP1 at a '216-Asp-|-Gly-217' bond. Cleaves and activates sterol regulatory element binding proteins (SREBPs) between the basic helix-loop-helix leucine zipper domain and the membrane attachment domain. Cleaves and activates caspase-6, -7 and -9 (CASP6, CASP7 and CASP9, respectively). Cleaves and inactivates interleukin-18 (IL18). Triggers cell adhesion in sympathetic neurons through RET cleavage. Cleaves IL-1 beta between an Asp and an Ala, releasing the mature cytokine which is involved in a variety of inflammatory processes. Cleaves and inhibits serine/threonine-protein kinase AKT1 in response to oxidative stress. Acts as an inhibitor of type I interferon production during virus-induced apoptosis by mediating cleavage of antiviral proteins CGAS, IRF3 and MAVS, thereby preventing cytokine overproduction. Also involved in pyroptosis by mediating cleavage and activation of gasdermin-E (GSDME). Cleaves XRCC4 and phospholipid scramblase proteins XKR4, XKR8 and XKR9, leading to promote phosphatidylserine exposure on apoptotic cell surface. Cleaves BIRC6 following inhibition of BIRC6-caspase binding by DIABLO/SMAC. The chain is Caspase-3 (CASP3) from Saimiri boliviensis boliviensis (Bolivian squirrel monkey).